A 325-amino-acid polypeptide reads, in one-letter code: uncharacterized protein (325 aa).

Disordered stretches follow at residues 32–65 (LSTP…VPPI) and 99–152 (GDSL…ASSG). The Globin domain occupies 153 to 291 (LVPSLNRLRI…LFTGVRDGYY (139 aa)).

This is an uncharacterized protein from Caenorhabditis elegans.